The chain runs to 32 residues: ATP synthase subunit O, mitochondrial (32 aa).

Belongs to the ATPase delta chain family. In terms of assembly, F-type ATPases have 2 components, CF(1) - the catalytic core - and CF(0) - the membrane proton channel. CF(1) has five subunits: alpha(3), beta(3), gamma(1), delta(1), epsilon(1). CF(0) has three main subunits: a, b and c.

It localises to the mitochondrion. The protein localises to the mitochondrion inner membrane. In terms of biological role, mitochondrial membrane ATP synthase (F(1)F(0) ATP synthase or Complex V) produces ATP from ADP in the presence of a proton gradient across the membrane which is generated by electron transport complexes of the respiratory chain. F-type ATPases consist of two structural domains, F(1) - containing the extramembraneous catalytic core and F(0) - containing the membrane proton channel, linked together by a central stalk and a peripheral stalk. During catalysis, ATP synthesis in the catalytic domain of F(1) is coupled via a rotary mechanism of the central stalk subunits to proton translocation. Part of the complex F(0) domain and the peripheric stalk, which acts as a stator to hold the catalytic alpha(3)beta(3) subcomplex and subunit a/ATP6 static relative to the rotary elements. This Spinacia oleracea (Spinach) protein is ATP synthase subunit O, mitochondrial.